A 147-amino-acid chain; its full sequence is Hemoglobin subunit beta (147 aa).

Valine 2 is modified (N-acetylvaline). The 145-residue stretch at 3-147 (HLSGDEKNAV…VANALAHRYH (145 aa)) folds into the Globin domain. A Phosphoserine modification is found at serine 45. N6-acetyllysine is present on lysine 60. A heme b-binding site is contributed by histidine 64. Position 83 is an N6-acetyllysine (lysine 83). Histidine 93 contacts heme b. At cysteine 94 the chain carries S-nitrosocysteine.

This sequence belongs to the globin family. As to quaternary structure, heterotetramer of two alpha chains and two beta chains. Red blood cells.

Its function is as follows. Involved in oxygen transport from the lung to the various peripheral tissues. The polypeptide is Hemoglobin subunit beta (HBB) (Camelus dromedarius (Dromedary)).